Here is a 483-residue protein sequence, read N- to C-terminus: Putative (R)-citramalate synthase CimA (483 aa).

The Pyruvate carboxyltransferase domain maps to 1-245 (MRDGEQTPGV…DTGIKHEQIY (245 aa)).

This sequence belongs to the alpha-IPM synthase/homocitrate synthase family. Homodimer.

The catalysed reaction is pyruvate + acetyl-CoA + H2O = (3R)-citramalate + CoA + H(+). The protein operates within amino-acid biosynthesis; L-isoleucine biosynthesis; 2-oxobutanoate from pyruvate: step 1/3. Functionally, catalyzes the condensation of pyruvate and acetyl-coenzyme A to form (R)-citramalate. This chain is Putative (R)-citramalate synthase CimA, found in Methanosarcina mazei (strain ATCC BAA-159 / DSM 3647 / Goe1 / Go1 / JCM 11833 / OCM 88) (Methanosarcina frisia).